The chain runs to 509 residues: Maturase K (509 aa).

Belongs to the intron maturase 2 family. MatK subfamily.

Its subcellular location is the plastid. The protein localises to the chloroplast. Its function is as follows. Usually encoded in the trnK tRNA gene intron. Probably assists in splicing its own and other chloroplast group II introns. In Avicennia marina (Grey mangrove), this protein is Maturase K.